The sequence spans 896 residues: DNA mismatch repair protein MutS (896 aa).

Position 618 to 625 (618 to 625 (GPNMSGKS)) interacts with ATP. The segment covering 805–825 (GKESTKTGKGENKNISHKTES) has biased composition (basic and acidic residues). The interval 805–826 (GKESTKTGKGENKNISHKTESD) is disordered.

It belongs to the DNA mismatch repair MutS family.

Functionally, this protein is involved in the repair of mismatches in DNA. It is possible that it carries out the mismatch recognition step. This protein has a weak ATPase activity. The sequence is that of DNA mismatch repair protein MutS from Halothermothrix orenii (strain H 168 / OCM 544 / DSM 9562).